Reading from the N-terminus, the 79-residue chain is DNA-directed RNA polymerase subunit omega (79 aa).

The protein belongs to the RNA polymerase subunit omega family. In terms of assembly, the RNAP catalytic core consists of 2 alpha, 1 beta, 1 beta' and 1 omega subunit. When a sigma factor is associated with the core the holoenzyme is formed, which can initiate transcription.

The enzyme catalyses RNA(n) + a ribonucleoside 5'-triphosphate = RNA(n+1) + diphosphate. Functionally, promotes RNA polymerase assembly. Latches the N- and C-terminal regions of the beta' subunit thereby facilitating its interaction with the beta and alpha subunits. This is DNA-directed RNA polymerase subunit omega from Kosmotoga olearia (strain ATCC BAA-1733 / DSM 21960 / TBF 19.5.1).